A 239-amino-acid chain; its full sequence is Thymidylate kinase (239 aa).

10-17 (GVNRVGKS) is a binding site for ATP.

This sequence belongs to the thymidylate kinase family.

The enzyme catalyses dTMP + ATP = dTDP + ADP. It functions in the pathway pyrimidine metabolism; dTTP biosynthesis. Its function is as follows. Catalyzes the conversion of dTMP to dTDP. This is Thymidylate kinase (TMK) from African swine fever virus (isolate Tick/South Africa/Pretoriuskop Pr4/1996) (ASFV).